We begin with the raw amino-acid sequence, 370 residues long: Phosphoserine aminotransferase (370 aa).

The residue at position 1 (M1) is an N-acetylmethionine. O-phospho-L-serine is bound by residues H44 and R45. Residue K51 is modified to N6-acetyllysine. The pyridoxal 5'-phosphate site is built by G79 and W107. K127 carries the N6-acetyllysine modification. Residues T156, D176, and Q199 each contribute to the pyridoxal 5'-phosphate site. K200 bears the N6-(pyridoxal phosphate)lysine mark. Residues N241 and T242 each contribute to the pyridoxal 5'-phosphate site. Residues K269, K318, and K323 each carry the N6-acetyllysine modification. S331 is subject to Phosphoserine. K333 is modified (N6-acetyllysine). 3 residues coordinate O-phospho-L-serine: H335, R336, and R342.

It belongs to the class-V pyridoxal-phosphate-dependent aminotransferase family. SerC subfamily. Homodimer. Pyridoxal 5'-phosphate is required as a cofactor.

It catalyses the reaction O-phospho-L-serine + 2-oxoglutarate = 3-phosphooxypyruvate + L-glutamate. It functions in the pathway amino-acid biosynthesis; L-serine biosynthesis; L-serine from 3-phospho-D-glycerate: step 2/3. Involved in L-serine biosynthesis via the phosphorylated pathway, a three-step pathway converting the glycolytic intermediate 3-phospho-D-glycerate into L-serine. Catalyzes the second step, that is the pyridoxal 5'-phosphate-dependent transamination of 3-phosphohydroxypyruvate and L-glutamate to O-phosphoserine (OPS) and alpha-ketoglutarate. The polypeptide is Phosphoserine aminotransferase (Mus musculus (Mouse)).